A 236-amino-acid polypeptide reads, in one-letter code: Urease accessory protein UreG 2 (236 aa).

A disordered region spans residues 1–40; sequence MEASVHIGNSVPHAHLHSAAPARPADPVRPDGSRRALRIG. 43-50 provides a ligand contact to GTP; the sequence is GPVGSGKT.

This sequence belongs to the SIMIBI class G3E GTPase family. UreG subfamily. Homodimer. UreD, UreF and UreG form a complex that acts as a GTP-hydrolysis-dependent molecular chaperone, activating the urease apoprotein by helping to assemble the nickel containing metallocenter of UreC. The UreE protein probably delivers the nickel.

The protein localises to the cytoplasm. In terms of biological role, facilitates the functional incorporation of the urease nickel metallocenter. This process requires GTP hydrolysis, probably effectuated by UreG. This is Urease accessory protein UreG 2 from Saccharopolyspora erythraea (strain ATCC 11635 / DSM 40517 / JCM 4748 / NBRC 13426 / NCIMB 8594 / NRRL 2338).